A 497-amino-acid chain; its full sequence is Putative BTB/POZ domain-containing protein R738 (497 aa).

In terms of domain architecture, BTB spans 16 to 86 (SDCKLVLDDG…FYEKSNVINA (71 aa)).

It belongs to the mimivirus BTB/WD family.

The polypeptide is Putative BTB/POZ domain-containing protein R738 (Acanthamoeba polyphaga (Amoeba)).